A 1427-amino-acid polypeptide reads, in one-letter code: DNA-directed RNA polymerase subunit beta' (1427 aa).

Positions 66, 68, 81, and 84 each coordinate Zn(2+). Mg(2+) contacts are provided by Asp-472, Asp-474, and Asp-476. The Zn(2+) site is built by Cys-815, Cys-889, Cys-896, and Cys-899.

Belongs to the RNA polymerase beta' chain family. In terms of assembly, the RNAP catalytic core consists of 2 alpha, 1 beta, 1 beta' and 1 omega subunit. When a sigma factor is associated with the core the holoenzyme is formed, which can initiate transcription. Mg(2+) serves as cofactor. Requires Zn(2+) as cofactor.

The catalysed reaction is RNA(n) + a ribonucleoside 5'-triphosphate = RNA(n+1) + diphosphate. In terms of biological role, DNA-dependent RNA polymerase catalyzes the transcription of DNA into RNA using the four ribonucleoside triphosphates as substrates. In Bacteroides thetaiotaomicron (strain ATCC 29148 / DSM 2079 / JCM 5827 / CCUG 10774 / NCTC 10582 / VPI-5482 / E50), this protein is DNA-directed RNA polymerase subunit beta'.